The primary structure comprises 246 residues: Transmembrane protein 41 homolog (246 aa).

A run of 6 helical transmembrane segments spans residues 12–32 (WLVL…YSNF), 68–88 (SVVL…AIPG), 101–123 (PFYV…CYTI), 159–179 (IFLR…SPVL), 182–202 (PLAP…FLYI), and 219–239 (SWSS…PILL).

This sequence belongs to the TMEM41 family.

It is found in the membrane. This is Transmembrane protein 41 homolog (tag-175) from Caenorhabditis elegans.